A 219-amino-acid polypeptide reads, in one-letter code: Deoxyribose-phosphate aldolase (219 aa).

The Proton donor/acceptor role is filled by Asp93. Lys154 functions as the Schiff-base intermediate with acetaldehyde in the catalytic mechanism. Residue Lys179 is the Proton donor/acceptor of the active site.

It belongs to the DeoC/FbaB aldolase family. DeoC type 1 subfamily.

Its subcellular location is the cytoplasm. It carries out the reaction 2-deoxy-D-ribose 5-phosphate = D-glyceraldehyde 3-phosphate + acetaldehyde. Its pathway is carbohydrate degradation; 2-deoxy-D-ribose 1-phosphate degradation; D-glyceraldehyde 3-phosphate and acetaldehyde from 2-deoxy-alpha-D-ribose 1-phosphate: step 2/2. Catalyzes a reversible aldol reaction between acetaldehyde and D-glyceraldehyde 3-phosphate to generate 2-deoxy-D-ribose 5-phosphate. The polypeptide is Deoxyribose-phosphate aldolase (Haloquadratum walsbyi (strain DSM 16790 / HBSQ001)).